The primary structure comprises 559 residues: Formate--tetrahydrofolate ligase (559 aa).

An ATP-binding site is contributed by 67–74 (TPAGEGKS).

The protein belongs to the formate--tetrahydrofolate ligase family.

It carries out the reaction (6S)-5,6,7,8-tetrahydrofolate + formate + ATP = (6R)-10-formyltetrahydrofolate + ADP + phosphate. Its pathway is one-carbon metabolism; tetrahydrofolate interconversion. The protein is Formate--tetrahydrofolate ligase of Lactobacillus delbrueckii subsp. bulgaricus (strain ATCC 11842 / DSM 20081 / BCRC 10696 / JCM 1002 / NBRC 13953 / NCIMB 11778 / NCTC 12712 / WDCM 00102 / Lb 14).